Reading from the N-terminus, the 523-residue chain is Cyclin-dependent kinase 17 (523 aa).

Serine 9 carries the post-translational modification Phosphoserine. Residues 30–55 (TIEENSSKDNEPIVKNGRPPTSHSMH) are disordered. Residues serine 80, serine 92, and serine 105 each carry the phosphoserine modification. Residues 103 to 123 (MGSDGESDQASGTSSDEVQSP) are disordered. The span at 110–123 (DQASGTSSDEVQSP) shows a compositional bias: polar residues. Residues serine 137, serine 146, serine 165, and serine 180 each carry the phosphoserine modification. The region spanning 192 to 473 (YIKLEKLGEG…AEEAMKHVYF (282 aa)) is the Protein kinase domain. ATP-binding positions include 198 to 206 (LGEGTYATV) and lysine 221. Aspartate 313 (proton acceptor) is an active-site residue. The segment at 501-523 (PGFRNSSYPETGHGKNRRQSMLF) is disordered. The span at 514 to 523 (GKNRRQSMLF) shows a compositional bias: basic residues.

This sequence belongs to the protein kinase superfamily. CMGC Ser/Thr protein kinase family. CDC2/CDKX subfamily. Found in a complex containing CABLES1, CDK16 and TDRD7. Interacts with TDRD7.

The enzyme catalyses L-seryl-[protein] + ATP = O-phospho-L-seryl-[protein] + ADP + H(+). It catalyses the reaction L-threonyl-[protein] + ATP = O-phospho-L-threonyl-[protein] + ADP + H(+). Its function is as follows. May play a role in terminally differentiated neurons. Has a Ser/Thr-phosphorylating activity for histone H1. The protein is Cyclin-dependent kinase 17 (CDK17) of Homo sapiens (Human).